We begin with the raw amino-acid sequence, 377 residues long: Queuine tRNA-ribosyltransferase (377 aa).

The active-site Proton acceptor is the Asp-89. Residues 89–93 (DSGGF), Asp-143, Gln-187, and Gly-214 each bind substrate. The interval 245–251 (GVGKPED) is RNA binding. Asp-264 serves as the catalytic Nucleophile. The interval 269–273 (TRNAR) is RNA binding; important for wobble base 34 recognition. Zn(2+) contacts are provided by Cys-302, Cys-304, Cys-307, and His-333.

This sequence belongs to the queuine tRNA-ribosyltransferase family. In terms of assembly, homodimer. Within each dimer, one monomer is responsible for RNA recognition and catalysis, while the other monomer binds to the replacement base PreQ1. Zn(2+) is required as a cofactor.

It catalyses the reaction 7-aminomethyl-7-carbaguanine + guanosine(34) in tRNA = 7-aminomethyl-7-carbaguanosine(34) in tRNA + guanine. It participates in tRNA modification; tRNA-queuosine biosynthesis. Its function is as follows. Catalyzes the base-exchange of a guanine (G) residue with the queuine precursor 7-aminomethyl-7-deazaguanine (PreQ1) at position 34 (anticodon wobble position) in tRNAs with GU(N) anticodons (tRNA-Asp, -Asn, -His and -Tyr). Catalysis occurs through a double-displacement mechanism. The nucleophile active site attacks the C1' of nucleotide 34 to detach the guanine base from the RNA, forming a covalent enzyme-RNA intermediate. The proton acceptor active site deprotonates the incoming PreQ1, allowing a nucleophilic attack on the C1' of the ribose to form the product. After dissociation, two additional enzymatic reactions on the tRNA convert PreQ1 to queuine (Q), resulting in the hypermodified nucleoside queuosine (7-(((4,5-cis-dihydroxy-2-cyclopenten-1-yl)amino)methyl)-7-deazaguanosine). This chain is Queuine tRNA-ribosyltransferase, found in Shewanella halifaxensis (strain HAW-EB4).